A 101-amino-acid polypeptide reads, in one-letter code: uncharacterized protein (101 aa).

This is an uncharacterized protein from Acanthamoeba polyphaga mimivirus (APMV).